Consider the following 380-residue polypeptide: 1-deoxy-D-xylulose 5-phosphate reductoisomerase (380 aa).

NADPH is bound by residues threonine 9, glycine 10, serine 11, valine 12, arginine 36, and asparagine 117. Residue lysine 118 coordinates 1-deoxy-D-xylulose 5-phosphate. Glutamate 119 contributes to the NADPH binding site. Aspartate 139 serves as a coordination point for Mn(2+). 4 residues coordinate 1-deoxy-D-xylulose 5-phosphate: serine 140, glutamate 141, serine 165, and histidine 188. Glutamate 141 lines the Mn(2+) pocket. An NADPH-binding site is contributed by glycine 194. 1-deoxy-D-xylulose 5-phosphate is bound by residues serine 201, asparagine 206, lysine 207, and glutamate 210. Glutamate 210 contacts Mn(2+).

The protein belongs to the DXR family. Requires Mg(2+) as cofactor. It depends on Mn(2+) as a cofactor.

It catalyses the reaction 2-C-methyl-D-erythritol 4-phosphate + NADP(+) = 1-deoxy-D-xylulose 5-phosphate + NADPH + H(+). Its pathway is isoprenoid biosynthesis; isopentenyl diphosphate biosynthesis via DXP pathway; isopentenyl diphosphate from 1-deoxy-D-xylulose 5-phosphate: step 1/6. Functionally, catalyzes the NADPH-dependent rearrangement and reduction of 1-deoxy-D-xylulose-5-phosphate (DXP) to 2-C-methyl-D-erythritol 4-phosphate (MEP). The protein is 1-deoxy-D-xylulose 5-phosphate reductoisomerase of Aquifex aeolicus (strain VF5).